A 278-amino-acid polypeptide reads, in one-letter code: Serine/arginine-rich splicing factor SR34B (278 aa).

In terms of domain architecture, RRM 1 spans 7-82 (RTIYVGNLPG…HHLRVELAHG (76 aa)). The span at 81 to 91 (HGGRRSSHDAR) shows a compositional bias: basic and acidic residues. 2 disordered regions span residues 81 to 121 (HGGR…SEYR) and 192 to 263 (EYDS…RSLS). Positions 95–107 (SGRGRGGRGGGDG) are enriched in gly residues. 2 stretches are compositionally biased toward basic and acidic residues: residues 108–120 (GGRE…RSEY) and 192–201 (EYDSRRDSRS). An RRM 2 domain is found at 120–195 (YRVVVSGLPS…EYVRVREYDS (76 aa)). S201, S203, S225, S231, S233, S242, S250, S259, and S263 each carry phosphoserine. Basic residues predominate over residues 207–243 (SYSKSRSRGRSPSRSRSRSRSRSKSRSPKAKSLRRSP).

Belongs to the splicing factor SR family. SR subfamily. Component of the spliceosome.

The protein localises to the nucleus speckle. The protein resides in the nucleus. Its subcellular location is the nucleoplasm. In terms of biological role, probably involved in intron recognition and spliceosome assembly. The protein is Serine/arginine-rich splicing factor SR34B (SR34B) of Arabidopsis thaliana (Mouse-ear cress).